Here is a 353-residue protein sequence, read N- to C-terminus: Deoxyribonuclease-2-alpha (353 aa).

Residues 1–19 form the signal peptide; that stretch reads MATLRSLLLAALLWVPAEA. A disulfide bond links Cys22 and Cys161. Residues Asn71, Asn88, Asn214, and Asn268 are each glycosylated (N-linked (GlcNAc...) asparagine). Intrachain disulfides connect Cys269–Cys349 and Cys310–Cys329. The active site involves His297.

This sequence belongs to the DNase II family. As to expression, highly expressed in fetal liver macrophages.

Its subcellular location is the lysosome. It catalyses the reaction Endonucleolytic cleavage to nucleoside 3'-phosphates and 3'-phosphooligonucleotide end-products.. Functionally, hydrolyzes DNA under acidic conditions with a preference for double-stranded DNA. Plays a major role in the clearance of nucleic acids generated through apoptosis, hence preventing autoinflammation. Necessary for proper fetal development and for definitive erythropoiesis in fetal liver and bone marrow, where it degrades nuclear DNA expelled from erythroid precursor cells. In Mus musculus (Mouse), this protein is Deoxyribonuclease-2-alpha (Dnase2).